The following is a 344-amino-acid chain: Meiotic recombination protein DMC1 homolog B (344 aa).

ATP is bound at residue 133-140; that stretch reads GEFRSGKT. Residue Arg235 participates in dsDNA binding. Residues Arg235, Phe238, Arg241, Arg247, and Arg315 each contribute to the ssDNA site. DsDNA-binding residues include Arg241 and Arg247.

It belongs to the RecA family. DMC1 subfamily. As to expression, highly expressed in spikelets. Expressed in meiotic young panicles.

Its subcellular location is the nucleus. In terms of biological role, recombinase that may participate in meiotic recombination, specifically in homologous strand assimilation, which is required for the resolution of meiotic double-strand breaks. Exhibits DNA-dependent ATPase activity when bound to single-stranded DNA (ssDNA). Mediates renaturation of homologous complementary strands as well as assimilation of single strands into homologous supercoiled duplexes leading to D-loop formation. Binds circular single-stranded DNA (ssDNA) and circular double-stranded DNA (dsDNA) in vitro. Catalyzes DNA homologous renaturation and DNA strand exchange. The rates of these activities are dependent on the state of ATP hydrolysis. Forms helical filaments along ssDNA and dsDNA, and promotes strand exchange between ssDNA and dsDNA with long DNA substrates of several thousand base pairs. The presence of the replication protein A is not required for this activity. Seems to be required for homologous pairing and subsequent chromosome segregation during male meiosis. May be not directly required for homologous pairing during male meiosis. Required for synaptonemal complex assembly and crossover formation. Functions redundantly with DMC1A. The protein is Meiotic recombination protein DMC1 homolog B of Oryza sativa subsp. japonica (Rice).